A 225-amino-acid chain; its full sequence is Probable CDP-diacylglycerol--inositol 3-phosphatidyltransferase 2 (225 aa).

A run of 2 helical transmembrane segments spans residues 6–26 and 29–49; these read PATLSVYLYIPNIVGYMRVLL and IAFSVCFSNKTLFSLLYFFSF. Asp52 and Asp55 together coordinate Mg(2+). A CDP-1,2-diacyl-sn-glycerol contacts are provided by Gly56, Arg60, and Ser66. Mg(2+) contacts are provided by Asp73 and Asp77. The active-site Proton acceptor is the Asp77. 3 consecutive transmembrane segments (helical) span residues 84 to 104, 143 to 163, and 184 to 204; these read LLVILSQIYRPSLVFLSLLAL, MFMGYCCVSCEVLYIILLLIA, and LSLLLALSIFGWSIKQIINVI.

The protein belongs to the CDP-alcohol phosphatidyltransferase class-I family. It depends on Mg(2+) as a cofactor. Mn(2+) is required as a cofactor.

It localises to the membrane. It catalyses the reaction a CDP-1,2-diacyl-sn-glycerol + myo-inositol = a 1,2-diacyl-sn-glycero-3-phospho-(1D-myo-inositol) + CMP + H(+). In terms of biological role, catalyzes the biosynthesis of phosphatidylinositol (PtdIns) as well as PtdIns:inositol exchange reaction. May thus act to reduce an excessive cellular PtdIns content. The exchange activity is due to the reverse reaction of PtdIns synthase and is dependent on CMP, which is tightly bound to the enzyme. This Arabidopsis thaliana (Mouse-ear cress) protein is Probable CDP-diacylglycerol--inositol 3-phosphatidyltransferase 2 (PIS2).